We begin with the raw amino-acid sequence, 392 residues long: MEEVSSEMEVEVQNRQLSDSSPAQNVKKFGLKNSIQTNFGSDYVFQIVPKIDWTAIAVSLSTNTVKLYSPVTGQYYGECKGHSDTVNQIAFSSDSAASPHVLHSCSSDGTIRSWDTRSFQQVSRIDTGNDQEIFSFSYGGAADNLLAGGCKEQVLLWDWRNSKQVACLEESHMDDVTQVHFVPNKPNKLLSASVDGLICLFNTEGDINDDDHLESVINVGTSIGKIGFLGDGYKKLWCLTHIETLSIWNWEDGSCEVNLEKARELASDSWTQDNVDYFVDCHCPGGEDLWVIGGTCAGTVGYFPVNYKQPGSIGTAEAILGGGHIDVVRSVLQMPGEYGGAAGLFGWTGGEDGRLCCWKSDEDATEINRSWTSSELVVKPPRNRKKNRHSPY.

4 WD repeats span residues G81–R124, G128–C167, S171–D211, and G323–N368.

As to expression, expressed in germinating seeds, rosettes leaves, flowers and siliques.

Its function is as follows. Involved in the control of plant growth development. Acts as negative regulator of seed germination, cell division in meristematic regions, plant growth and overall biomass accumulation. May function by regulating ribosome activities and biogenesis in plant cells. In Arabidopsis thaliana (Mouse-ear cress), this protein is WD repeat-containing protein GTS1.